Here is a 249-residue protein sequence, read N- to C-terminus: NAD-dependent protein deacylase 2 (249 aa).

Positions 1–240 (MNVADLLASS…PRLVEEVKRR (240 aa)) constitute a Deacetylase sirtuin-type domain. 18-37 (GAGISAESGVPTFRGPGGLW) lines the NAD(+) pocket. Residues tyrosine 62 and arginine 65 each coordinate substrate. 96–99 (QNVD) lines the NAD(+) pocket. The active-site Proton acceptor is the histidine 114. Positions 122, 125, 142, and 145 each coordinate Zn(2+). Residues 182-184 (GTS), 208-210 (NVE), and alanine 226 each bind NAD(+).

Belongs to the sirtuin family. Class III subfamily. Zn(2+) serves as cofactor.

The protein localises to the cytoplasm. The catalysed reaction is N(6)-acetyl-L-lysyl-[protein] + NAD(+) + H2O = 2''-O-acetyl-ADP-D-ribose + nicotinamide + L-lysyl-[protein]. The enzyme catalyses N(6)-succinyl-L-lysyl-[protein] + NAD(+) + H2O = 2''-O-succinyl-ADP-D-ribose + nicotinamide + L-lysyl-[protein]. NAD-dependent lysine deacetylase and desuccinylase that specifically removes acetyl and succinyl groups on target proteins. Modulates the activities of several proteins which are inactive in their acylated form. Deacetylates the N-terminal lysine residue of Alba, the major archaeal chromatin protein and that, in turn, increases Alba's DNA binding affinity, thereby repressing transcription. This Pyrobaculum aerophilum (strain ATCC 51768 / DSM 7523 / JCM 9630 / CIP 104966 / NBRC 100827 / IM2) protein is NAD-dependent protein deacylase 2.